The primary structure comprises 529 residues: GMP synthase [glutamine-hydrolyzing] (529 aa).

Residues 17 to 206 form the Glutamine amidotransferase type-1 domain; that stretch reads TILVLDFGSQ…AIDICQASNN (190 aa). Cysteine 93 (nucleophile) is an active-site residue. Catalysis depends on residues histidine 180 and glutamate 182. The GMPS ATP-PPase domain occupies 207 to 404; sequence WTMENFIDTE…MGVPHDLVWR (198 aa). 235–241 contacts ATP; that stretch reads SGGVDST. Residues arginine 308, aspartate 466, lysine 521, and glutamate 527 each contribute to the XMP site.

Homodimer. Mg(2+) is required as a cofactor.

It is found in the cytoplasm. The protein resides in the cytosol. The enzyme catalyses XMP + L-glutamine + ATP + H2O = GMP + L-glutamate + AMP + diphosphate + 2 H(+). The protein operates within purine metabolism; GMP biosynthesis; GMP from XMP (L-Gln route): step 1/1. In terms of biological role, catalyzes the conversion of xanthine monophosphate (XMP) to GMP in the presence of glutamine and ATP through an adenyl-XMP intermediate. This Debaryomyces hansenii (strain ATCC 36239 / CBS 767 / BCRC 21394 / JCM 1990 / NBRC 0083 / IGC 2968) (Yeast) protein is GMP synthase [glutamine-hydrolyzing] (GUA1).